The chain runs to 248 residues: Pulmonary surfactant-associated protein A1 (248 aa).

The first 20 residues, 1-20 (MWLCPLALNLILMAASGAVC), serve as a signal peptide directing secretion. A Collagen-like domain is found at 28 to 100 (GSPGIPGTPG…PGERGPPGLP (73 aa)). 9 positions are modified to 4-hydroxyproline: P30, P33, P36, P42, P54, P57, P63, P67, and P70. The interval 31 to 101 (GIPGTPGSHG…GERGPPGLPA (71 aa)) is disordered. Residues 42–51 (PGRDGRDGLK) are compositionally biased toward basic and acidic residues. The span at 54–70 (PGPPGPMGPPGEMPCPP) shows a compositional bias: pro residues. A C-type lectin domain is found at 132 to 248 (MTVGEKVFSS…LYSRLTICEF (117 aa)). Disulfide bonds link C155–C246 and C224–C238. An N-linked (GlcNAc...) asparagine glycan is attached at N207.

The protein belongs to the SFTPA family. Oligomeric complex of 6 set of homotrimers. Interacts with CD93. In terms of assembly, (Microbial infection) Binds M.bovis cell surface protein Apa via its glycosylated sites; probably also recognizes other bacterial moieties. As to quaternary structure, (Microbial infection) Binds to the S.aureus extracellular adherence protein, Eap, thereby enhancing phagocytosis and killing of S.aureus by alveolar macrophages. (Microbial infection) Interacts with M.pneumoniae CARDS toxin; CARDS probably uses this protein as a receptor. N-acetylated.

The protein resides in the secreted. The protein localises to the extracellular space. It is found in the extracellular matrix. It localises to the surface film. In presence of calcium ions, it binds to surfactant phospholipids and contributes to lower the surface tension at the air-liquid interface in the alveoli of the mammalian lung and is essential for normal respiration. Enhances the expression of MYO18A/SP-R210 on alveolar macrophages. In terms of biological role, (Microbial infection) Recognition of M.tuberculosis by dendritic cells may occur partially via this molecule. Can recognize, bind, and opsonize pathogens to enhance their elimination by alveolar macrophages. Functionally, (Microbial infection) Binds M.pneumoniae CARDS toxin, serves as one receptor for this pathogen. When SFTPA1 is down-regulated by siRNA, less toxin binds to human cells and less vacuolization (a symptom of M.pneumoniae infection) is seen. This chain is Pulmonary surfactant-associated protein A1 (SFTPA1), found in Homo sapiens (Human).